A 484-amino-acid chain; its full sequence is Phospholipase A1-Ialpha2, chloroplastic (484 aa).

The N-terminal 63 residues, 1-63 (MALIQNPNMK…LAPVILNSPV (63 aa)), are a transit peptide targeting the chloroplast. A GXSXG motif is present at residues 295 to 299 (GHSMG). Catalysis depends on serine 297, which acts as the Acyl-ester intermediate. Catalysis depends on charge relay system residues aspartate 360 and histidine 411.

This sequence belongs to the AB hydrolase superfamily. Lipase family. As to expression, ubiquitous. Highest expression in flowers and leaves.

The protein resides in the plastid. It is found in the chloroplast. Its subcellular location is the plastoglobule. It catalyses the reaction a 1,2-diacyl-3-O-[alpha-D-galactosyl-(1-&gt;6)-beta-D-galactosyl]-sn-glycerol + H2O = acyl-3-O-[alpha-D-galactosyl-(1-&gt;6)-beta-D-galactosyl]-sn-glycerol + a fatty acid + H(+). The enzyme catalyses a 1,2-diacyl-3-O-(beta-D-galactosyl)-sn-glycerol + H2O = an acyl-3-O-(beta-D-galactosyl)-sn-glycerol + a fatty acid + H(+). In terms of biological role, acylhydrolase that catalyzes the hydrolysis of phosphatidylcholine at the sn-1 position. Has a strong galactolipase activity toward monogalactosyldiacylglycerol (MGDG) and digalactosyldiacylglycerol (DGDG). Low triacylglycerol (TAG) lipase activity. Plays a role in plant growth and in leaf senescence. In Arabidopsis thaliana (Mouse-ear cress), this protein is Phospholipase A1-Ialpha2, chloroplastic.